Here is a 1025-residue protein sequence, read N- to C-terminus: Multidrug resistance protein MdtC (1025 aa).

12 consecutive transmembrane segments (helical) span residues 3-23 (FFAL…AITL), 333-353 (EVEQ…FLFL), 360-380 (IIPA…MYLC), 387-407 (LSLM…IVVL), 431-451 (VGFT…PLLL), 463-483 (FAVT…TLTP), 528-548 (LVGA…ISIP), 853-873 (VILI…LYES), 875-895 (VHPL…LLAL), 897-917 (LFNA…IGIV), 953-973 (PIMM…LSGG), and 984-1004 (ITIV…TPVV).

It belongs to the resistance-nodulation-cell division (RND) (TC 2.A.6) family. MdtC subfamily. Part of a tripartite efflux system composed of MdtA, MdtB and MdtC. MdtC forms a heteromultimer with MdtB.

The protein localises to the cell inner membrane. Functionally, the MdtABC tripartite complex confers resistance against novobiocin and deoxycholate. This is Multidrug resistance protein MdtC from Escherichia coli O81 (strain ED1a).